We begin with the raw amino-acid sequence, 567 residues long: Beta-galactoside-specific lectin 2 (567 aa).

A signal peptide spans 1–33 (MNARLASSRAWVWCFLMVGLVCGATAKAESKIN). A glycan (N-linked (GlcNAc...) asparagine) is linked at Asn145. Glu198 is an active-site residue. 2 disulfide bridges follow: Cys280–Cys306 and Cys322–Cys341. Positions 288 to 301 (DVHNWPLVIRPVMV) are cleaved as a propeptide — connecting peptide. The 131-residue stretch at 309-439 (SEPTVRIVGR…DSLGQSWLAS (131 aa)) folds into the Ricin B-type lectin 1 domain. 324–326 (DVR) serves as a coordination point for D-galactose. Asn362 is a glycosylation site (N-linked (GlcNAc...) asparagine). Cysteines 365 and 382 form a disulfide. Asn440 carries an N-linked (GlcNAc...) asparagine glycan. The 124-residue stretch at 443-566 (APREVTIYGF…GNPNQMWLPV (124 aa)) folds into the Ricin B-type lectin 2 domain. 2 cysteine pairs are disulfide-bonded: Cys456–Cys469 and Cys495–Cys512. Position 539-541 (539-541 (DVR)) interacts with D-galactose.

The protein belongs to the ribosome-inactivating protein family. Type 2 RIP subfamily. In terms of assembly, disulfide-linked dimer of A and B chains.

The catalysed reaction is Endohydrolysis of the N-glycosidic bond at one specific adenosine on the 28S rRNA.. Functionally, the A chain is responsible for inhibiting protein synthesis through the catalytic inactivation of 60S ribosomal subunits by removing adenine from position 4,324 of 28S rRNA. The B chain binds to cell receptors and probably facilitates the entry into the cell of the A chain; B chains are also responsible for cell agglutination (lectin activity). This chain is Beta-galactoside-specific lectin 2, found in Viscum album (European mistletoe).